A 521-amino-acid polypeptide reads, in one-letter code: Melanopsin (521 aa).

At 1–71 (MDSPSGPRVL…VDVPDHAHYT (71 aa)) the chain is on the extracellular side. Residues Asn-30 and Asn-34 are each glycosylated (N-linked (GlcNAc...) asparagine). The chain crosses the membrane as a helical span at residues 72–92 (LGTVILLVGLTGMLGNLTVIY). Residues 93 to 106 (TFCRNRGLRTPANM) are Cytoplasmic-facing. Residues 107–127 (FIINLAVSDFLMSVTQAPVFF) traverse the membrane as a helical segment. Residues 128-143 (ASSLYKKWLFGETGCE) lie on the Extracellular side of the membrane. Cys-142 and Cys-220 form a disulfide bridge. A helical transmembrane segment spans residues 144–164 (FYAFCGAVFGITSMITLTAIA). The Cytoplasmic portion of the chain corresponds to 165-187 (MDRYLVITRPLATIGRGSKRRTA). The chain crosses the membrane as a helical span at residues 188 to 208 (LVLLGVWLYALAWSLPPFFGW). The Extracellular portion of the chain corresponds to 209-237 (SAYVPEGLLTSCSWDYMTFTPQVRAYTML). A helical membrane pass occupies residues 238 to 258 (LFCFVFFLPLLIIIFCYIFIF). The Cytoplasmic portion of the chain corresponds to 259-293 (RAIRETGRACEGCGESPLRQRRQWQRLQSEWKMAK). A helical membrane pass occupies residues 294–314 (VALIVILLFVLSWAPYSTVAL). Residues 315 to 329 (VAFAGYSHILTPYMS) are Extracellular-facing. A helical transmembrane segment spans residues 330-350 (SVPAVIAKASAIHNPIIYAIT). Position 337 is an N6-(retinylidene)lysine (Lys-337). The Cytoplasmic segment spans residues 351-521 (HPKYRVAIAQ…LEDDVTLRHL (171 aa)). Residues 445 to 486 (GELKASSSPQVQRSKTPKVPGPSTCRPMKGQGARPSSLRGDQ) form a disordered region. A compositionally biased stretch (polar residues) spans 449 to 458 (ASSSPQVQRS).

The protein belongs to the G-protein coupled receptor 1 family. Opsin subfamily. As to expression, expressed in the retinal pigment epithelium and ganglion cell layer (at protein level). Also expressed in amacrine cell layers of the retina. Weakly expressed in vibrissae, and tail. In terms of tissue distribution, observed with processes in the outer strata of inner plexiform layer (IPL) close to the inner nuclear layer (INL) or is found to be bistratified with processes located both in the inner (ON) or outer (OFF) layers of the IPL (at protein level). A second population of isoform 1 is identified in processes which are confined to the inner layer of the IPL near to the ganglion cell layer (GCL) (at protein level). About 40 times more abundant than isoform 1 in the retina (at protein level). Isoform 2 is involved in processes localized to the outer IPL or is bistratified with processes in both the inner and outer layers of the IPL (at protein level). Isoform 2 is absent in the processes confined only to the inner layer of the IPL (at protein level).

Its subcellular location is the cell membrane. It localises to the cell projection. The protein localises to the axon. It is found in the dendrite. The protein resides in the perikaryon. Photoreceptor that binds cis-retinaldehydes. Contributes to pupillar reflex, photoentrainment and other non-image forming responses to light. May be involved in the optokinetic visual tracking response. May be involved in the regulation of retinal hyaloid vessel growth and regression. The protein is Melanopsin (Opn4) of Mus musculus (Mouse).